A 360-amino-acid polypeptide reads, in one-letter code: Cuticle collagen dpy-2 (360 aa).

Triple-helical region stretches follow at residues 123-152 (GERGPSGDSGLPALPGAPGPDGAPGRPGTT), 174-230 (GPRG…KGRT), and 238-303 (GPPG…PGTC). Disordered stretches follow at residues 127 to 158 (PSGDSGLPALPGAPGPDGAPGRPGTTPNASCI) and 174 to 360 (GPRG…IRKW). Residues 189–198 (GEYGIGGRPG) are compositionally biased toward gly residues. Residues 242–258 (DSGLPGPWGPPGSAGMP) are compositionally biased toward low complexity. Residues 273 to 288 (PGPPGAPGPGGMPGPN) are compositionally biased toward pro residues.

It belongs to the cuticular collagen family. In terms of assembly, collagen polypeptide chains are complexed within the cuticle by disulfide bonds and other types of covalent cross-links.

Its function is as follows. Nematode cuticles are composed largely of collagen-like proteins. The cuticle functions both as an exoskeleton and as a barrier to protect the worm from its environment. Mutations in dpy-2 affects the body shape. This Caenorhabditis elegans protein is Cuticle collagen dpy-2 (dpy-2).